Consider the following 305-residue polypeptide: tRNA uridine(34) hydroxylase (305 aa).

Residues 125-219 enclose the Rhodanese domain; the sequence is ADENTVVVDT…YLEEVPREQS (95 aa). Residue cysteine 179 is the Cysteine persulfide intermediate of the active site.

The protein belongs to the TrhO family.

The catalysed reaction is uridine(34) in tRNA + AH2 + O2 = 5-hydroxyuridine(34) in tRNA + A + H2O. Functionally, catalyzes oxygen-dependent 5-hydroxyuridine (ho5U) modification at position 34 in tRNAs. In Brucella ovis (strain ATCC 25840 / 63/290 / NCTC 10512), this protein is tRNA uridine(34) hydroxylase.